The sequence spans 476 residues: Arginine biosynthesis bifunctional protein ArgJ, mitochondrial (476 aa).

Positions 193, 219, 237, 337, 471, and 476 each coordinate substrate. Catalysis depends on Thr-237, which acts as the Nucleophile.

This sequence belongs to the ArgJ family. In terms of assembly, heterodimer of an alpha and a beta chain. The alpha and beta chains are autoproteolytically processed from a single precursor protein within the mitochondrion.

The protein localises to the mitochondrion matrix. It catalyses the reaction N(2)-acetyl-L-ornithine + L-glutamate = N-acetyl-L-glutamate + L-ornithine. The catalysed reaction is L-glutamate + acetyl-CoA = N-acetyl-L-glutamate + CoA + H(+). It participates in amino-acid biosynthesis; L-arginine biosynthesis; L-ornithine and N-acetyl-L-glutamate from L-glutamate and N(2)-acetyl-L-ornithine (cyclic): step 1/1. It functions in the pathway amino-acid biosynthesis; L-arginine biosynthesis; N(2)-acetyl-L-ornithine from L-glutamate: step 1/4. Its function is as follows. Catalyzes two activities which are involved in the cyclic version of arginine biosynthesis: the synthesis of acetylglutamate from glutamate and acetyl-CoA, and of ornithine by transacetylation between acetylornithine and glutamate. The chain is Arginine biosynthesis bifunctional protein ArgJ, mitochondrial from Cryptococcus neoformans var. neoformans serotype D (strain JEC21 / ATCC MYA-565) (Filobasidiella neoformans).